The sequence spans 852 residues: Protein Shroom1 (852 aa).

M1 bears the N-acetylmethionine mark. Position 18 is a phosphoserine (S18). Disordered regions lie at residues 34-54, 81-109, and 125-218; these read SSFS…GTDL, TSPR…PLNR, and AAQA…ANQQ. Position 103 is a phosphothreonine (T103). Over residues 125–144 the composition is skewed to low complexity; it reads AAQAAEPPSPPASRAAYRQR. 2 positions are modified to phosphoserine: S133 and S137. The 89-residue stretch at 145–233 folds into the ASD1 domain; it reads LQGAQRRVLR…SEPGKLDRVG (89 aa). Basic and acidic residues predominate over residues 152 to 164; sequence VLRETSFQRKELR. A phosphoserine mark is found at S166, S190, and S224. Disordered stretches follow at residues 276 to 320, 399 to 431, 464 to 496, and 823 to 852; these read LPET…GSGG, MRSP…QRTG, SRPT…TAAE, and DLGH…LLLT. Residues 279 to 289 show a composition bias toward polar residues; the sequence is TQPQGSMNLDS. The segment covering 301-313 has biased composition (low complexity); it reads ASRSRSASGEVLG. A compositionally biased stretch (polar residues) spans 465–479; the sequence is RPTSHTPTGTANDNI. One can recognise an ASD2 domain in the interval 543–825; the sequence is EELVQELARL…QLDAIRDDLG (283 aa). The span at 830 to 852 shows a compositional bias: pro residues; the sequence is SPSPARPPGTCPPVQPPFPLLLT.

The protein belongs to the shroom family. Interacts with F-actin.

The protein resides in the cytoplasm. Its subcellular location is the cytoskeleton. In terms of biological role, may be involved in the assembly of microtubule arrays during cell elongation. The chain is Protein Shroom1 (SHROOM1) from Homo sapiens (Human).